The chain runs to 298 residues: Protoheme IX farnesyltransferase (298 aa).

The next 8 helical transmembrane spans lie at 26–46 (IVIL…GGPP), 48–68 (LGLT…ANAI), 110–130 (FLVL…GLLF), 147–167 (IVIG…AVTG), 174–194 (VIMF…LALF), 220–240 (ILLY…TGTV), 243–263 (LYLW…VGLL), and 276–296 (TYGW…LDVT).

This sequence belongs to the UbiA prenyltransferase family. Protoheme IX farnesyltransferase subfamily. In terms of assembly, interacts with CtaA.

It localises to the cell membrane. It catalyses the reaction heme b + (2E,6E)-farnesyl diphosphate + H2O = Fe(II)-heme o + diphosphate. It participates in porphyrin-containing compound metabolism; heme O biosynthesis; heme O from protoheme: step 1/1. Converts heme B (protoheme IX) to heme O by substitution of the vinyl group on carbon 2 of heme B porphyrin ring with a hydroxyethyl farnesyl side group. This is Protoheme IX farnesyltransferase from Symbiobacterium thermophilum (strain DSM 24528 / JCM 14929 / IAM 14863 / T).